The sequence spans 804 residues: Probable replication endonuclease from prophage-like region 1 (804 aa).

Catalysis depends on O-(5'-phospho-DNA)-tyrosine intermediate residues Tyr-498 and Tyr-502.

It belongs to the phage GPA family.

Possible endonuclease which induces a single-strand cut and initiates DNA replication. The polypeptide is Probable replication endonuclease from prophage-like region 1 (Salmonella typhi).